Reading from the N-terminus, the 488-residue chain is Ribosomal protein uS12 methylthiotransferase RimO (488 aa).

The MTTase N-terminal domain maps to 4-120; sequence RKVHFVSLGC…LGRVLAGDAE (117 aa). Residues cysteine 13, cysteine 49, cysteine 83, cysteine 155, cysteine 159, and cysteine 162 each contribute to the [4Fe-4S] cluster site. Positions 141-377 constitute a Radical SAM core domain; it reads STPGGSAYVK…MTLQRRISHK (237 aa). Residues 380–448 form the TRAM domain; that stretch reads AAMIGRELEV…DYDLVGELLD (69 aa).

This sequence belongs to the methylthiotransferase family. RimO subfamily. The cofactor is [4Fe-4S] cluster.

It is found in the cytoplasm. It catalyses the reaction L-aspartate(89)-[ribosomal protein uS12]-hydrogen + (sulfur carrier)-SH + AH2 + 2 S-adenosyl-L-methionine = 3-methylsulfanyl-L-aspartate(89)-[ribosomal protein uS12]-hydrogen + (sulfur carrier)-H + 5'-deoxyadenosine + L-methionine + A + S-adenosyl-L-homocysteine + 2 H(+). In terms of biological role, catalyzes the methylthiolation of an aspartic acid residue of ribosomal protein uS12. The polypeptide is Ribosomal protein uS12 methylthiotransferase RimO (Sorangium cellulosum (strain So ce56) (Polyangium cellulosum (strain So ce56))).